Reading from the N-terminus, the 146-residue chain is Ribosomal RNA large subunit methyltransferase H (146 aa).

S-adenosyl-L-methionine is bound by residues Leu-68, Gly-95, and 114-119 (LSSLTF).

The protein belongs to the RNA methyltransferase RlmH family. As to quaternary structure, homodimer.

The protein localises to the cytoplasm. The enzyme catalyses pseudouridine(1915) in 23S rRNA + S-adenosyl-L-methionine = N(3)-methylpseudouridine(1915) in 23S rRNA + S-adenosyl-L-homocysteine + H(+). Its function is as follows. Specifically methylates the pseudouridine at position 1915 (m3Psi1915) in 23S rRNA. The polypeptide is Ribosomal RNA large subunit methyltransferase H (Thermodesulfovibrio yellowstonii (strain ATCC 51303 / DSM 11347 / YP87)).